The chain runs to 119 residues: Large ribosomal subunit protein bL19 (119 aa).

The protein belongs to the bacterial ribosomal protein bL19 family.

Functionally, this protein is located at the 30S-50S ribosomal subunit interface and may play a role in the structure and function of the aminoacyl-tRNA binding site. This Idiomarina loihiensis (strain ATCC BAA-735 / DSM 15497 / L2-TR) protein is Large ribosomal subunit protein bL19.